The following is a 219-amino-acid chain: uncharacterized protein (219 aa).

An N-terminal signal peptide occupies residues 1–15; it reads MYVLFLLSWVLVAGA. Residue Asn-118 is glycosylated (N-linked (GlcNAc...) asparagine). The disordered stretch occupies residues 138–174; sequence GEVGEDPGKRARKRRLGLPIGEPGEDVGKRMRQRQQG.

Component of the acid-insoluble and acid-soluble organic matrix of calcified layers of the shell (at protein level).

It is found in the secreted. This is an uncharacterized protein from Lottia gigantea (Giant owl limpet).